The following is a 189-amino-acid chain: Chitin synthase 1 (189 aa).

This sequence belongs to the chitin synthase family. Class I subfamily.

The protein localises to the cell membrane. It carries out the reaction [(1-&gt;4)-N-acetyl-beta-D-glucosaminyl](n) + UDP-N-acetyl-alpha-D-glucosamine = [(1-&gt;4)-N-acetyl-beta-D-glucosaminyl](n+1) + UDP + H(+). Functionally, polymerizes chitin, a structural polymer of the cell wall and septum, by transferring the sugar moiety of UDP-GlcNAc to the non-reducing end of the growing chitin polymer. The polypeptide is Chitin synthase 1 (chs1) (Aspergillus niger).